A 768-amino-acid chain; its full sequence is Integrin beta-8 (768 aa).

An N-terminal signal peptide occupies residues 1–42 (MCGSALGLPPAAFVRLRSCRPGPAAFLRAAWVLSLVLGLGRS). Residues 43–683 (ENSRCASSHA…ECFSSPSYLR (641 aa)) are Extracellular-facing. Positions 46 to 95 (RCASSHAVSCSECLALGPDCGWCVHEDFISGGPRSERCDIVSNLISKGCP) constitute a PSI domain. 25 disulfide bridges follow: Cys-47–Cys-65, Cys-55–Cys-469, Cys-58–Cys-83, Cys-68–Cys-94, Cys-211–Cys-218, Cys-266–Cys-307, Cys-407–Cys-419, Cys-439–Cys-467, Cys-471–Cys-491, Cys-471–Cys-494, Cys-481–Cys-494, Cys-499–Cys-528, Cys-511–Cys-526, Cys-520–Cys-531, Cys-533–Cys-546, Cys-553–Cys-567, Cys-561–Cys-572, Cys-574–Cys-583, Cys-585–Cys-609, Cys-593–Cys-607, Cys-601–Cys-612, Cys-614–Cys-624, Cys-627–Cys-630, Cys-634–Cys-661, and Cys-640–Cys-657. The VWFA domain occupies 146–384 (PVDLYYLVDV…NLVVEAYQKL (239 aa)). Positions 154 and 156 each coordinate Mg(2+). Asp-193 is a Ca(2+) binding site. The N-linked (GlcNAc...) asparagine glycan is linked to Asn-233. The Ca(2+) site is built by Asn-249, Asp-251, Pro-253, and Glu-254. Glu-254 contacts Mg(2+). N-linked (GlcNAc...) asparagine glycosylation occurs at Asn-402. N-linked (GlcNAc...) asparagine glycans are attached at residues Asn-421, Asn-431, and Asn-456. 4 consecutive I-EGF domains span residues 471–495 (CEAS…PQCQ), 499–547 (CHQE…KYCE), 548–584 (KDDF…DRCQ), and 585–625 (CPSA…RFCE). Asn-648 carries an N-linked (GlcNAc...) asparagine glycan. The chain crosses the membrane as a helical span at residues 684–703 (IFFIIFIVTFLIGLLKILII). The Cytoplasmic portion of the chain corresponds to 704-768 (RQVILQWNSS…NAHETFRCNF (65 aa)).

It belongs to the integrin beta chain family. Heterodimer of an alpha and a beta subunit. Beta-8 (ITGB8) associates with alpha-V (ITGAV) to form ITGAV:ITGB8. ITGAV:ITGB8 interacts with TGFB1. As to expression, placenta, kidney, brain, ovary, uterus and in several transformed cells.

It localises to the cell membrane. Integrin alpha-V:beta-8 (ITGAV:ITGB8) is a receptor for fibronectin. It recognizes the sequence R-G-D in its ligands. Integrin alpha-V:beta-6 (ITGAV:ITGB6) mediates R-G-D-dependent release of transforming growth factor beta-1 (TGF-beta-1) from regulatory Latency-associated peptide (LAP), thereby playing a key role in TGF-beta-1 activation on the surface of activated regulatory T-cells (Tregs). Required during vasculogenesis. The polypeptide is Integrin beta-8 (ITGB8) (Oryctolagus cuniculus (Rabbit)).